The sequence spans 394 residues: Protein-glutamate methylesterase/protein-glutamine glutaminase (394 aa).

The segment at M1 to D24 is disordered. Positions G15 to D24 are enriched in low complexity. The Response regulatory domain maps to R27–R145. A 4-aspartylphosphate modification is found at D78. One can recognise a CheB-type methylesterase domain in the interval P191 to A393. Catalysis depends on residues S211, H238, and D335.

Belongs to the CheB family. In terms of processing, phosphorylated by CheA. Phosphorylation of the N-terminal regulatory domain activates the methylesterase activity.

The protein localises to the cytoplasm. It catalyses the reaction [protein]-L-glutamate 5-O-methyl ester + H2O = L-glutamyl-[protein] + methanol + H(+). It carries out the reaction L-glutaminyl-[protein] + H2O = L-glutamyl-[protein] + NH4(+). Involved in chemotaxis. Part of a chemotaxis signal transduction system that modulates chemotaxis in response to various stimuli. Catalyzes the demethylation of specific methylglutamate residues introduced into the chemoreceptors (methyl-accepting chemotaxis proteins or MCP) by CheR. Also mediates the irreversible deamidation of specific glutamine residues to glutamic acid. The protein is Protein-glutamate methylesterase/protein-glutamine glutaminase of Azospirillum brasilense.